The chain runs to 210 residues: uncharacterized protein (210 aa).

Positions 101–114 (QELPEPSSPQSQSS) are enriched in low complexity. Residues 101-166 (QELPEPSSPQ…SSGVSSDLQK (66 aa)) are disordered. Positions 147–164 (RSTSPVTASTSSGVSSDL) are enriched in polar residues.

This is an uncharacterized protein from Alcelaphine herpesvirus 1 (strain C500) (AlHV-1).